The following is a 179-amino-acid chain: Large ribosomal subunit protein uL5 (179 aa).

The protein belongs to the universal ribosomal protein uL5 family. In terms of assembly, part of the 50S ribosomal subunit; part of the 5S rRNA/L5/L18/L25 subcomplex. Contacts the 5S rRNA and the P site tRNA. Forms a bridge to the 30S subunit in the 70S ribosome.

Functionally, this is one of the proteins that bind and probably mediate the attachment of the 5S RNA into the large ribosomal subunit, where it forms part of the central protuberance. In the 70S ribosome it contacts protein S13 of the 30S subunit (bridge B1b), connecting the 2 subunits; this bridge is implicated in subunit movement. Contacts the P site tRNA; the 5S rRNA and some of its associated proteins might help stabilize positioning of ribosome-bound tRNAs. The protein is Large ribosomal subunit protein uL5 of Nitratidesulfovibrio vulgaris (strain DSM 19637 / Miyazaki F) (Desulfovibrio vulgaris).